A 120-amino-acid polypeptide reads, in one-letter code: Small ribosomal subunit protein eS25 (120 aa).

Residues 1 to 32 are disordered; the sequence is MPPKAGQTKKAKMEAANKGAKKTTKKWSKGQS. The segment covering 19 to 28 has biased composition (basic residues); the sequence is GAKKTTKKWS.

It belongs to the eukaryotic ribosomal protein eS25 family.

This is Small ribosomal subunit protein eS25 (RPS25) from Leishmania infantum.